The following is a 272-amino-acid chain: MTDLSTLFHAAILGVVEGLTEFLPVSSTGHMIIVGHMLGFTGDKAETFEVIIQLGSILAVVVVFWRRLFGLIGIHFGEVPHEGKTNGKLKLSHIILAMLPAVTLGLMFHDVIKSLFNPQSVMYALVIGGVLLITAEILKPKTPKAEGLDDITYRQAFMIGCFQCLALWPGFSRSGATISGGMLMGVNRYTASEFSFILAVPMMMGASGLDLYKSLHFLSASDIPMFAVGFVTAFVVALVAIKTFLALIKRISFIPFAIYRFIVAAAVYWVFM.

7 consecutive transmembrane segments (helical) span residues 22 to 42 (FLPVSSTGHMIIVGHMLGFTG), 45 to 65 (AETFEVIIQLGSILAVVVVFW), 92 to 112 (SHIILAMLPAVTLGLMFHDVI), 118 to 138 (PQSVMYALVIGGVLLITAEIL), 189 to 209 (YTASEFSFILAVPMMMGASGL), 228 to 248 (VGFVTAFVVALVAIKTFLALI), and 251 to 271 (ISFIPFAIYRFIVAAAVYWVF).

This sequence belongs to the UppP family.

Its subcellular location is the cell inner membrane. It carries out the reaction di-trans,octa-cis-undecaprenyl diphosphate + H2O = di-trans,octa-cis-undecaprenyl phosphate + phosphate + H(+). Functionally, catalyzes the dephosphorylation of undecaprenyl diphosphate (UPP). Confers resistance to bacitracin. The chain is Undecaprenyl-diphosphatase from Photorhabdus laumondii subsp. laumondii (strain DSM 15139 / CIP 105565 / TT01) (Photorhabdus luminescens subsp. laumondii).